We begin with the raw amino-acid sequence, 141 residues long: Large ribosomal subunit protein uL11 (141 aa).

This sequence belongs to the universal ribosomal protein uL11 family. As to quaternary structure, part of the ribosomal stalk of the 50S ribosomal subunit. Interacts with L10 and the large rRNA to form the base of the stalk. L10 forms an elongated spine to which L12 dimers bind in a sequential fashion forming a multimeric L10(L12)X complex. In terms of processing, one or more lysine residues are methylated.

In terms of biological role, forms part of the ribosomal stalk which helps the ribosome interact with GTP-bound translation factors. The protein is Large ribosomal subunit protein uL11 of Helicobacter acinonychis (strain Sheeba).